We begin with the raw amino-acid sequence, 296 residues long: Nucleotide-binding protein Pnec_1620 (296 aa).

Residue 8–15 coordinates ATP; that stretch reads GISGSGKS. 57-60 lines the GTP pocket; that stretch reads DARR.

The protein belongs to the RapZ-like family.

In terms of biological role, displays ATPase and GTPase activities. The polypeptide is Nucleotide-binding protein Pnec_1620 (Polynucleobacter necessarius subsp. necessarius (strain STIR1)).